The following is a 923-amino-acid chain: Meiotic recombination protein rec11 (923 aa).

One can recognise an SCD domain in the interval 278–365 (LFSRIHDIRA…DRFSLRIVEI (88 aa)).

The sequence is that of Meiotic recombination protein rec11 (rec11) from Schizosaccharomyces pombe (strain 972 / ATCC 24843) (Fission yeast).